The primary structure comprises 508 residues: Light-independent protochlorophyllide reductase subunit B (508 aa).

Asp-36 is a [4Fe-4S] cluster binding site. Residue Asp-294 is the Proton donor of the active site. 429 to 430 (GM) lines the substrate pocket.

This sequence belongs to the ChlB/BchB/BchZ family. As to quaternary structure, protochlorophyllide reductase is composed of three subunits; ChlL, ChlN and ChlB. Forms a heterotetramer of two ChlB and two ChlN subunits. [4Fe-4S] cluster serves as cofactor.

The enzyme catalyses chlorophyllide a + oxidized 2[4Fe-4S]-[ferredoxin] + 2 ADP + 2 phosphate = protochlorophyllide a + reduced 2[4Fe-4S]-[ferredoxin] + 2 ATP + 2 H2O. The protein operates within porphyrin-containing compound metabolism; chlorophyll biosynthesis (light-independent). Component of the dark-operative protochlorophyllide reductase (DPOR) that uses Mg-ATP and reduced ferredoxin to reduce ring D of protochlorophyllide (Pchlide) to form chlorophyllide a (Chlide). This reaction is light-independent. The NB-protein (ChlN-ChlB) is the catalytic component of the complex. This Thermosynechococcus vestitus (strain NIES-2133 / IAM M-273 / BP-1) protein is Light-independent protochlorophyllide reductase subunit B.